The chain runs to 395 residues: ATP phosphoribosyltransferase regulatory subunit (395 aa).

Belongs to the class-II aminoacyl-tRNA synthetase family. HisZ subfamily. Heteromultimer composed of HisG and HisZ subunits.

Its subcellular location is the cytoplasm. The protein operates within amino-acid biosynthesis; L-histidine biosynthesis; L-histidine from 5-phospho-alpha-D-ribose 1-diphosphate: step 1/9. Its function is as follows. Required for the first step of histidine biosynthesis. May allow the feedback regulation of ATP phosphoribosyltransferase activity by histidine. The protein is ATP phosphoribosyltransferase regulatory subunit of Pseudomonas putida (strain ATCC 700007 / DSM 6899 / JCM 31910 / BCRC 17059 / LMG 24140 / F1).